Consider the following 116-residue polypeptide: Putative UPF0320 protein YLL065W (116 aa).

It belongs to the UPF0320 family.

This is Putative UPF0320 protein YLL065W from Saccharomyces cerevisiae (strain ATCC 204508 / S288c) (Baker's yeast).